A 185-amino-acid polypeptide reads, in one-letter code: Large ribosomal subunit protein uL5 (185 aa).

Belongs to the universal ribosomal protein uL5 family. As to quaternary structure, part of the 50S ribosomal subunit; part of the 5S rRNA/L5/L18/L25 subcomplex. Contacts the 5S rRNA and the P site tRNA. Forms a bridge to the 30S subunit in the 70S ribosome.

Functionally, this is one of the proteins that bind and probably mediate the attachment of the 5S RNA into the large ribosomal subunit, where it forms part of the central protuberance. In the 70S ribosome it contacts protein S13 of the 30S subunit (bridge B1b), connecting the 2 subunits; this bridge is implicated in subunit movement. Contacts the P site tRNA; the 5S rRNA and some of its associated proteins might help stabilize positioning of ribosome-bound tRNAs. The chain is Large ribosomal subunit protein uL5 from Bartonella tribocorum (strain CIP 105476 / IBS 506).